A 733-amino-acid chain; its full sequence is Arginine decarboxylase 1A, chloroplastic (733 aa).

Residues Met-1–Val-44 constitute a chloroplast transit peptide. Lys-157 is modified (N6-(pyridoxal phosphate)lysine). Pyridoxal 5'-phosphate-binding positions include Ser-309, Gly-346, and Glu-395–Arg-398. Tyr-460–Ala-461 is a substrate binding site. The active-site Proton donor; shared with dimeric partner is the Cys-548. Asp-549 is a binding site for substrate. Position 592 (Tyr-592) interacts with pyridoxal 5'-phosphate.

This sequence belongs to the Orn/Lys/Arg decarboxylase class-II family. SpeA subfamily. In terms of assembly, interacts, via its C-terminal internal region, with the tobacco mosaic virus (TMV) replicase helicase region. Requires Mg(2+) as cofactor. The cofactor is pyridoxal 5'-phosphate.

The protein resides in the plastid. The protein localises to the chloroplast. It catalyses the reaction L-arginine + H(+) = agmatine + CO2. It participates in alkaloid biosynthesis; nicotine biosynthesis. The protein operates within amine and polyamine biosynthesis; agmatine biosynthesis; agmatine from L-arginine: step 1/1. Involved in the biosynthesis of pyridine alkaloid natural products, leading mainly to the production of anabasine, anatabine, nicotine and nornicotine, effective deterrents against herbivores with antiparasitic and pesticide properties (neurotoxins); nornicotine serves as the precursor in the synthesis of the carcinogen compound N'-nitrosonornicotine (NNN). Required for the biosynthesis of putrescine. Catalyzes the first step of polyamine (PA) biosynthesis to produce putrescine from arginine. In Nicotiana tabacum (Common tobacco), this protein is Arginine decarboxylase 1A, chloroplastic.